The primary structure comprises 92 residues: Isoleucine--tRNA ligase (92 aa).

Positions 55, 58, 75, and 78 each coordinate Zn(2+).

It belongs to the class-I aminoacyl-tRNA synthetase family. IleS type 1 subfamily. As to quaternary structure, monomer. The cofactor is Zn(2+).

It localises to the cytoplasm. It carries out the reaction tRNA(Ile) + L-isoleucine + ATP = L-isoleucyl-tRNA(Ile) + AMP + diphosphate. Its function is as follows. Catalyzes the attachment of isoleucine to tRNA(Ile). As IleRS can inadvertently accommodate and process structurally similar amino acids such as valine, to avoid such errors it has two additional distinct tRNA(Ile)-dependent editing activities. One activity is designated as 'pretransfer' editing and involves the hydrolysis of activated Val-AMP. The other activity is designated 'posttransfer' editing and involves deacylation of mischarged Val-tRNA(Ile). In Klebsiella aerogenes (Enterobacter aerogenes), this protein is Isoleucine--tRNA ligase (ileS).